Reading from the N-terminus, the 403-residue chain is Argininosuccinate synthase (403 aa).

Residues 10–18 and alanine 38 contribute to the ATP site; that span reads AYSGGVDTS. Tyrosine 89 is an L-citrulline binding site. Glycine 119 serves as a coordination point for ATP. 3 residues coordinate L-aspartate: threonine 121, asparagine 125, and aspartate 126. Asparagine 125 provides a ligand contact to L-citrulline. Residues arginine 129, serine 177, serine 186, glutamate 262, and tyrosine 274 each contribute to the L-citrulline site.

The protein belongs to the argininosuccinate synthase family. Type 1 subfamily. As to quaternary structure, homotetramer.

It is found in the cytoplasm. The enzyme catalyses L-citrulline + L-aspartate + ATP = 2-(N(omega)-L-arginino)succinate + AMP + diphosphate + H(+). It participates in amino-acid biosynthesis; L-arginine biosynthesis; L-arginine from L-ornithine and carbamoyl phosphate: step 2/3. The sequence is that of Argininosuccinate synthase from Parasynechococcus marenigrum (strain WH8102).